A 207-amino-acid chain; its full sequence is Large ribosomal subunit protein uL4 (207 aa).

The segment at 49 to 78 (HAVKNRSAVSGGGRKPWRQKGTGRARQGSI) is disordered.

This sequence belongs to the universal ribosomal protein uL4 family. As to quaternary structure, part of the 50S ribosomal subunit.

In terms of biological role, one of the primary rRNA binding proteins, this protein initially binds near the 5'-end of the 23S rRNA. It is important during the early stages of 50S assembly. It makes multiple contacts with different domains of the 23S rRNA in the assembled 50S subunit and ribosome. Its function is as follows. Forms part of the polypeptide exit tunnel. The polypeptide is Large ribosomal subunit protein uL4 (Streptococcus gordonii (strain Challis / ATCC 35105 / BCRC 15272 / CH1 / DL1 / V288)).